A 335-amino-acid chain; its full sequence is Nucleoid-associated protein Ent638_2782 (335 aa).

It belongs to the YejK family.

It localises to the cytoplasm. Its subcellular location is the nucleoid. This Enterobacter sp. (strain 638) protein is Nucleoid-associated protein Ent638_2782.